The sequence spans 603 residues: Elongation factor 4 (603 aa).

The 183-residue stretch at 7 to 189 (VRIRNFCIIA…AVVERIPPPP (183 aa)) folds into the tr-type G domain. Residues 19–24 (DHGKST) and 136–139 (NKID) contribute to the GTP site.

Belongs to the TRAFAC class translation factor GTPase superfamily. Classic translation factor GTPase family. LepA subfamily.

The protein resides in the cell inner membrane. The catalysed reaction is GTP + H2O = GDP + phosphate + H(+). Functionally, required for accurate and efficient protein synthesis under certain stress conditions. May act as a fidelity factor of the translation reaction, by catalyzing a one-codon backward translocation of tRNAs on improperly translocated ribosomes. Back-translocation proceeds from a post-translocation (POST) complex to a pre-translocation (PRE) complex, thus giving elongation factor G a second chance to translocate the tRNAs correctly. Binds to ribosomes in a GTP-dependent manner. This is Elongation factor 4 from Nostoc punctiforme (strain ATCC 29133 / PCC 73102).